Consider the following 104-residue polypeptide: Synaptic plasticity regulator PANTS (104 aa).

Positions 58-104 are disordered; sequence RRSAEAQADSLPPGPEGEPRVAGAGPNAVTGILTRNQGTERPHGDTR. Basic and acidic residues predominate over residues 95 to 104; that stretch reads GTERPHGDTR.

This sequence belongs to the UPF0545 family. In terms of assembly, interacts with RTN4 isoform A/Nogo-A; the interaction results in enhanced RTN4-mediated inhibition of AMPA receptor clustering. Also interacts with NCAM1, RANBP2 and CCT8. Post-translationally, rapidly degraded by proteolysis following neuronal stimulation, resulting in increased AMPA receptor clustering.

Its subcellular location is the synapse. The protein resides in the synaptic cleft. Negatively regulates long-term potentiation and modulates adult synaptic plasticity. Stabilizes the interaction of RTN4 isoform A/Nogo-A with its receptors, inhibiting clustering of postsynaptic AMPA receptors at synaptic sites. Upon neuronal stimulation, degraded at synapses, reducing RTN4 signaling and allowing AMPA receptor clustering at individual synapses. The sequence is that of Synaptic plasticity regulator PANTS from Bos taurus (Bovine).